A 207-amino-acid polypeptide reads, in one-letter code: Guanylate kinase (207 aa).

Positions 5–184 (GNLFIVSAPS…ALADLKSIIF (180 aa)) constitute a Guanylate kinase-like domain. Residue 12–19 (APSGAGKS) participates in ATP binding.

This sequence belongs to the guanylate kinase family.

The protein resides in the cytoplasm. The catalysed reaction is GMP + ATP = GDP + ADP. Its function is as follows. Essential for recycling GMP and indirectly, cGMP. This is Guanylate kinase from Shewanella denitrificans (strain OS217 / ATCC BAA-1090 / DSM 15013).